Consider the following 151-residue polypeptide: Large ribosomal subunit protein uL13 (151 aa).

This sequence belongs to the universal ribosomal protein uL13 family. Part of the 50S ribosomal subunit.

This protein is one of the early assembly proteins of the 50S ribosomal subunit, although it is not seen to bind rRNA by itself. It is important during the early stages of 50S assembly. The protein is Large ribosomal subunit protein uL13 of Microcystis aeruginosa (strain NIES-843 / IAM M-2473).